The following is an 80-amino-acid chain: Serine palmitoyltransferase small subunit B (80 aa).

Over 1–11 (MDVKHIKDYLS) the chain is Cytoplasmic. A helical transmembrane segment spans residues 12 to 29 (WLYYQYLLITCSYVLEPW). Residues 30–36 (EQSIFNT) lie on the Lumenal side of the membrane. A helical transmembrane segment spans residues 37-57 (LLLTIIAMVIYSSYIFIPIHV). The Cytoplasmic portion of the chain corresponds to 58–80 (RLAVEFFSRIFGGQHESTVALMS).

The protein belongs to the SPTSS family. SPTSSB subfamily. Component of the serine palmitoyltransferase (SPT) complex, which is composed of SPTLC1, SPTLC2 or SPTLC3 and SPTSSA or SPTSSB. The heterodimer consisting of SPTLC1 and SPTLC2/SPTLC3 forms the catalytic core of the enzyme, while SPTSSA or SPTSSB subunits determine substrate specificity. SPT also interacts with ORMDL proteins, especially ORMDL3, which negatively regulate SPT activity in the presence of ceramides.

It is found in the endoplasmic reticulum membrane. Its pathway is lipid metabolism; sphingolipid metabolism. Functionally, component of the serine palmitoyltransferase multisubunit enzyme (SPT) that catalyzes the initial and rate-limiting step in sphingolipid biosynthesis by condensing L-serine and activated acyl-CoA (most commonly palmitoyl-CoA) to form long-chain bases. The SPT complex is composed of SPTLC1, SPTLC2 or SPTLC3 and SPTSSA or SPTSSB. Within this complex, the heterodimer consisting of SPTLC1 and SPTLC2/SPTLC3 forms the catalytic core. Within the SPT complex, SPTSSB stimulates the catalytic activity and plays a role in substrate specificity. SPT complexes with this subunit showing a preference for longer acyl-CoAs. The SPTLC1-SPTLC2-SPTSSB complex shows a strong preference for C18-CoA substrate, while the SPTLC1-SPTLC3-SPTSSB isozyme displays an ability to use a broader range of acyl-CoAs, without apparent preference. This is Serine palmitoyltransferase small subunit B (sptssb) from Xenopus laevis (African clawed frog).